We begin with the raw amino-acid sequence, 220 residues long: 7-cyano-7-deazaguanine synthase (220 aa).

7–17 contributes to the ATP binding site; the sequence is LSGGLDSAVCL. Zn(2+) contacts are provided by cysteine 191, cysteine 199, cysteine 202, and cysteine 205.

This sequence belongs to the QueC family. As to quaternary structure, homodimer. Requires Zn(2+) as cofactor.

The catalysed reaction is 7-carboxy-7-deazaguanine + NH4(+) + ATP = 7-cyano-7-deazaguanine + ADP + phosphate + H2O + H(+). It functions in the pathway purine metabolism; 7-cyano-7-deazaguanine biosynthesis. In terms of biological role, catalyzes the ATP-dependent conversion of 7-carboxy-7-deazaguanine (CDG) to 7-cyano-7-deazaguanine (preQ(0)). This is 7-cyano-7-deazaguanine synthase from Desulforudis audaxviator (strain MP104C).